Reading from the N-terminus, the 450-residue chain is Phosphoglucosamine mutase (450 aa).

Ser103 functions as the Phosphoserine intermediate in the catalytic mechanism. The Mg(2+) site is built by Ser103, Asp243, Asp245, and Asp247. Residue Ser103 is modified to Phosphoserine.

The protein belongs to the phosphohexose mutase family. Requires Mg(2+) as cofactor. In terms of processing, activated by phosphorylation.

It catalyses the reaction alpha-D-glucosamine 1-phosphate = D-glucosamine 6-phosphate. Its function is as follows. Catalyzes the conversion of glucosamine-6-phosphate to glucosamine-1-phosphate. The protein is Phosphoglucosamine mutase of Latilactobacillus sakei subsp. sakei (strain 23K) (Lactobacillus sakei subsp. sakei).